Consider the following 252-residue polypeptide: 3-deoxy-manno-octulosonate cytidylyltransferase 2 (252 aa).

The protein belongs to the KdsB family.

The protein resides in the cytoplasm. It catalyses the reaction 3-deoxy-alpha-D-manno-oct-2-ulosonate + CTP = CMP-3-deoxy-beta-D-manno-octulosonate + diphosphate. It functions in the pathway nucleotide-sugar biosynthesis; CMP-3-deoxy-D-manno-octulosonate biosynthesis; CMP-3-deoxy-D-manno-octulosonate from 3-deoxy-D-manno-octulosonate and CTP: step 1/1. The protein operates within bacterial outer membrane biogenesis; lipopolysaccharide biosynthesis. Its function is as follows. Activates KDO (a required 8-carbon sugar) for incorporation into bacterial lipopolysaccharide in Gram-negative bacteria. This chain is 3-deoxy-manno-octulosonate cytidylyltransferase 2, found in Actinobacillus pleuropneumoniae serotype 5b (strain L20).